We begin with the raw amino-acid sequence, 269 residues long: MRCTRAIRQTARTGWLTWLAILAVTAPVTSPAWADDPPATVYRYDSRPPEDVFQNGFTAWGNNDNVLEHLTGRSCQVGSSNSAFVSTSSSRRYTEVYLEHRMQEAVEAERAGRGTGHFIGYIYEVRADNNFYGAASSYFEYVDTYGDNAGRILAGALATYQSEYLAHRRIPPENIRRVTRVYHNGITGETTTTEYPNARYVSQQTRANPNPYTSRRSVASIVGTLVRMAPVTGACMARQAESPEAMAAWSERAGEAMVLVYYESIAYSF.

The first 34 residues, 1 to 34 (MRCTRAIRQTARTGWLTWLAILAVTAPVTSPAWA), serve as a signal peptide directing secretion.

It belongs to the bacterial exotoxin subunit A family.

The polypeptide is Pertussis toxin subunit 1 homolog (ptxA) (Bordetella bronchiseptica (strain ATCC BAA-588 / NCTC 13252 / RB50) (Alcaligenes bronchisepticus)).